Reading from the N-terminus, the 461-residue chain is Dihydrolipoyl dehydrogenase (461 aa).

FAD contacts are provided by residues 34-42 (EEDQAGGTC), K51, and G114. C42 and C47 are joined by a disulfide. Residues 177 to 181 (GGGVI), E200, and 261 to 264 (AIGR) each bind NAD(+). Positions 304 and 312 each coordinate FAD. The active-site Proton acceptor is H436.

The protein belongs to the class-I pyridine nucleotide-disulfide oxidoreductase family. FAD is required as a cofactor.

The protein resides in the cytoplasm. It catalyses the reaction N(6)-[(R)-dihydrolipoyl]-L-lysyl-[protein] + NAD(+) = N(6)-[(R)-lipoyl]-L-lysyl-[protein] + NADH + H(+). The branched-chain alpha-keto dehydrogenase complex catalyzes the overall conversion of alpha-keto acids to acyl-CoA and CO(2). It contains multiple copies of 3 enzymatic components: branched-chain alpha-keto acid decarboxylase (E1), lipoamide acyltransferase (E2) and lipoamide dehydrogenase (E3). In Chlamydia pneumoniae (Chlamydophila pneumoniae), this protein is Dihydrolipoyl dehydrogenase (lpdA).